The sequence spans 139 residues: Ribosome-binding factor A (139 aa).

This sequence belongs to the RbfA family. Monomer. Binds 30S ribosomal subunits, but not 50S ribosomal subunits or 70S ribosomes.

Its subcellular location is the cytoplasm. One of several proteins that assist in the late maturation steps of the functional core of the 30S ribosomal subunit. Associates with free 30S ribosomal subunits (but not with 30S subunits that are part of 70S ribosomes or polysomes). Required for efficient processing of 16S rRNA. May interact with the 5'-terminal helix region of 16S rRNA. The chain is Ribosome-binding factor A from Methylobacterium sp. (strain 4-46).